We begin with the raw amino-acid sequence, 249 residues long: MNIVKIKDLSLFYGKTHALKNINMNIEKNKVTALIGPSGCGKSTFLRSINRMNDFIENVNIDGEVIFHGKDIYKEFDEIDLRKRVGMVFQKANPFPMSIYDNVAYGPRIHGIKNKNELDIIVEKSLKKAALWDEIKDRLNKNAQGLSGGQQQRLCIARTLAVEPELILMDEPTSALDPISTSKIEELMHTLKKDYPVIIVTHNMQQAGRISDDTAFFLSGEVIEFGKTSNIFYNPQDKRTEDYISGRFG.

The ABC transporter domain occupies 4 to 244; that stretch reads VKIKDLSLFY…PQDKRTEDYI (241 aa). Position 36-43 (36-43) interacts with ATP; it reads GPSGCGKS.

This sequence belongs to the ABC transporter superfamily. Phosphate importer (TC 3.A.1.7) family. As to quaternary structure, the complex is composed of two ATP-binding proteins (PstB), two transmembrane proteins (PstC and PstA) and a solute-binding protein (PstS).

It is found in the cell membrane. It catalyses the reaction phosphate(out) + ATP + H2O = ADP + 2 phosphate(in) + H(+). Functionally, part of the ABC transporter complex PstSACB involved in phosphate import. Responsible for energy coupling to the transport system. The chain is Phosphate import ATP-binding protein PstB from Clostridium tetani (strain Massachusetts / E88).